The primary structure comprises 855 residues: DNA mismatch repair protein MutS (855 aa).

Position 613-620 (613-620) interacts with ATP; it reads GPNMGGKS. A disordered region spans residues 796-816; it reads TTSLPHEMPSQQSGKPASPMQ.

This sequence belongs to the DNA mismatch repair MutS family.

In terms of biological role, this protein is involved in the repair of mismatches in DNA. It is possible that it carries out the mismatch recognition step. This protein has a weak ATPase activity. The protein is DNA mismatch repair protein MutS of Pseudomonas aeruginosa (strain LESB58).